The chain runs to 471 residues: MKPIVAIVGRPNVGKSTLFNRLTQSRHAIVEDQPGVTRDRLYADTEWNGRTLTLVDTGGIQLDKEGDTIEAHVTRQAELAIREADVIIFVVDVTDGVTAPDLEVADLLRRQRKPVIVAVNKVENLKREDEALEFWALGLEPLINVSAEHGLGTGDLLDAVVAALPDLSEPEPEEGGPVRVAVIGRPNVGKSSLVNAILGEERVIVSDVPGTTRDAIDVLVERGEDKFLLIDTAGMRRKARVEEAVERYSVMRALRAVERAQVVLIVIDAQDGVTEQDQRIAGYAHENGKACIVVVNKWDLIEKDDRTMAKMTEEVRMRLAFMDYAMIHFVSAKTRARVHRLLPLIKEAAANHARRISTRELNDLVREAVALNPPPSDKGRRLKIFYATQPHVSPPGFVFFVNDSELVHFSYQRYLENQLRQTYAFEGTPINLYFRTREKAKLGERPVRVRRVLAGGQTREIRRAARKRSTE.

2 EngA-type G domains span residues 3 to 168 (PIVA…PDLS) and 178 to 353 (VRVA…ANHA). Residues 9–16 (GRPNVGKS), 56–60 (DTGGI), 120–123 (NKVE), 184–191 (GRPNVGKS), 231–235 (DTAGM), and 296–299 (NKWD) each bind GTP. The region spanning 354–438 (RRISTRELND…PINLYFRTRE (85 aa)) is the KH-like domain.

It belongs to the TRAFAC class TrmE-Era-EngA-EngB-Septin-like GTPase superfamily. EngA (Der) GTPase family. As to quaternary structure, associates with the 50S ribosomal subunit.

Functionally, GTPase that plays an essential role in the late steps of ribosome biogenesis. This is GTPase Der from Symbiobacterium thermophilum (strain DSM 24528 / JCM 14929 / IAM 14863 / T).